The chain runs to 433 residues: MTVASTVSQEILNHCLAIEGQRRLQGVLKVSGAKNSALVLMTASLLTEELVELINVPNLTDIAGMGRILSALGVQVEHSGNGVALNAGNLTSHEPPYELVNSLRASFFCIGSLLGRLGHARVPLPGGCRIGARPVVEHIRGLKALGAHVSVEHGIVSACVKGSKKRLTGAPIVLDCPSVGATETLLMAAVLATGTTTIENAAHEPEVQDLANLLIQMGADISGAGGPVITIHGVERLAGVSNYPVIPDRIEAGTFLIAAAITRSPLRVEPVIPEHLSAVLQKLRDCGCQLEIDQTGISITPGDIQAVDITTQPFPGFPTDLQAPFMALMATAQGTSVISEKIYENRLQHVAELQRMGASIRVDGSTAIVEGVAQLSAAPVTGSDLRAAAAMVLAGLAANGTTKVSGLKHLYRGYDKVEAKLNAVGAQLERQQG.

Position 34–35 (34–35) interacts with phosphoenolpyruvate; sequence KN. Arg104 is a binding site for UDP-N-acetyl-alpha-D-glucosamine. Cys128 acts as the Proton donor in catalysis. The residue at position 128 (Cys128) is a 2-(S-cysteinyl)pyruvic acid O-phosphothioketal. Positions 320 and 342 each coordinate UDP-N-acetyl-alpha-D-glucosamine.

This sequence belongs to the EPSP synthase family. MurA subfamily.

The protein localises to the cytoplasm. It catalyses the reaction phosphoenolpyruvate + UDP-N-acetyl-alpha-D-glucosamine = UDP-N-acetyl-3-O-(1-carboxyvinyl)-alpha-D-glucosamine + phosphate. Its pathway is cell wall biogenesis; peptidoglycan biosynthesis. Its function is as follows. Cell wall formation. Adds enolpyruvyl to UDP-N-acetylglucosamine. This Parasynechococcus marenigrum (strain WH8102) protein is UDP-N-acetylglucosamine 1-carboxyvinyltransferase.